The primary structure comprises 983 residues: Junction-mediating and -regulatory protein (983 aa).

The interaction with p300/EP300 stretch occupies residues 1-119 (MSFALEETLE…RSARSLKGDP (119 aa)). A compositionally biased stretch (polar residues) spans 50–61 (TAQRQRSGSREQ). A disordered region spans residues 50-167 (TAQRQRSGSR…PVPPAPPVPP (118 aa)). Residues 77–94 (AARGRSEAAASATAALRS) are compositionally biased toward low complexity. A phosphoserine mark is found at Ser108 and Ser114. Over residues 158–167 (PVPPAPPVPP) the composition is skewed to pro residues. 3 coiled-coil regions span residues 315 to 351 (SELR…ELLD), 480 to 528 (LQMM…QLQL), and 571 to 612 (EAML…AKKA). The tract at residues 469-558 (EKLQYAVSKE…SIKRLISEKR (90 aa)) is interaction with p300/EP300. Phosphoserine is present on Ser704. A disordered region spans residues 723-855 (EKTEVGGGGS…IPKSASAPAA (133 aa)). Over residues 734 to 761 (LGPSQTAEPQSLVQLEDTSSEQLESTSL) the composition is skewed to polar residues. Pro residues predominate over residues 794–818 (PLPPPLPPTPPPPPPPPPPPPPPLP). A compositionally biased stretch (basic and acidic residues) spans 831–846 (TLEKDALRTEGNERSI). Ser883 is subject to Phosphoserine. The region spanning 916–933 (DSNNILAQIRKGVKLKKV) is the WH2 domain. Residues 962 to 983 (IKEASPESEDEEEALPCTDWEN) are disordered. The segment covering 967-983 (PESEDEEEALPCTDWEN) has biased composition (acidic residues). Ser969 bears the Phosphoserine mark.

It belongs to the JMY family. Interacts with p300/EP300, the complex activates p53/TP53 transcriptional activity. Interacts with TTC5/STRAP; the interaction takes place in the nucleus and facilitates the association between JMY and p300/EP300. Interacts with TTC5/STRAP; the interaction takes place in the cytoplasm and results in the inhibition of JYM's nucleation activity. Interacts with MAP1LC3B; the interaction results in the activation of JYM's nucleation activity in the cytoplasm. Post-translationally, ubiquitinated by MDM2, leading to its subsequent degradation by the proteasome. In case of DNA damage, the interaction with MDM2 is altered, preventing degradation and allowing interaction with p300/EP300 and its function in p53/TP53 stress response. As to expression, widely expressed, except in testis where it is expressed at low level.

The protein resides in the nucleus. The protein localises to the cytoplasmic vesicle. It localises to the cytoplasm. It is found in the cytoskeleton. Its subcellular location is the endomembrane system. The protein resides in the autophagosome membrane. Functionally, acts both as a nuclear p53/TP53-cofactor and a cytoplasmic regulator of actin dynamics depending on conditions. In nucleus, acts as a cofactor that increases p53/TP53 response via its interaction with p300/EP300. Increases p53/TP53-dependent transcription and apoptosis, suggesting an important role in p53/TP53 stress response such as DNA damage. In cytoplasm, acts as a nucleation-promoting factor for both branched and unbranched actin filaments. Activates the Arp2/3 complex to induce branched actin filament networks. Also catalyzes actin polymerization in the absence of Arp2/3, creating unbranched filaments. Contributes to cell motility by controlling actin dynamics. May promote the rapid formation of a branched actin network by first nucleating new mother filaments and then activating Arp2/3 to branch off these filaments. Upon nutrient stress, directly recruited by MAP1LC3B to the phagophore membrane surfaces to promote actin assembly during autophagy. The p53/TP53-cofactor and actin activator activities are regulated via its subcellular location. The sequence is that of Junction-mediating and -regulatory protein (Jmy) from Mus musculus (Mouse).